The following is a 136-amino-acid chain: Nucleoside diphosphate kinase (136 aa).

ATP-binding residues include K10, F58, R86, T92, R104, and N114. The active-site Pros-phosphohistidine intermediate is H117.

Belongs to the NDK family. In terms of assembly, homotetramer. It depends on Mg(2+) as a cofactor.

Its subcellular location is the cytoplasm. The enzyme catalyses a 2'-deoxyribonucleoside 5'-diphosphate + ATP = a 2'-deoxyribonucleoside 5'-triphosphate + ADP. It carries out the reaction a ribonucleoside 5'-diphosphate + ATP = a ribonucleoside 5'-triphosphate + ADP. Functionally, major role in the synthesis of nucleoside triphosphates other than ATP. The ATP gamma phosphate is transferred to the NDP beta phosphate via a ping-pong mechanism, using a phosphorylated active-site intermediate. In Mycobacterium marinum (strain ATCC BAA-535 / M), this protein is Nucleoside diphosphate kinase.